The primary structure comprises 188 residues: GTPase KRas (188 aa).

Residues 10–18 (GAGGVGKSA), 29–35 (VDEYDPT), 59–60 (AG), and 116–119 (NKCD) contribute to the GTP site. An Effector region motif is present at residues 32 to 40 (YDPTIEDSY). The tract at residues 167 to 188 (KEKMSKEGKKKKKKSKTKCVLM) is disordered. Cysteine 185 is subject to Cysteine methyl ester. A lipid anchor (S-farnesyl cysteine) is attached at cysteine 185. Positions 186-188 (VLM) are cleaved as a propeptide — removed in mature form.

This sequence belongs to the small GTPase superfamily. Ras family.

The protein resides in the cell membrane. It is found in the cytoplasm. It carries out the reaction GTP + H2O = GDP + phosphate + H(+). Its activity is regulated as follows. Alternates between an inactive form bound to GDP and an active form bound to GTP. Activated by a guanine nucleotide-exchange factor (GEF) and inactivated by a GTPase-activating protein (GAP). Functionally, ras proteins bind GDP/GTP and possess intrinsic GTPase activity. Plays an important role in the regulation of cell proliferation. May play a role in promoting oncogenic events by inducing transcriptional silencing of tumor suppressor genes (TSGs). The chain is GTPase KRas (kras) from Cyprinus carpio (Common carp).